We begin with the raw amino-acid sequence, 563 residues long: Autophagy-related protein 18 (563 aa).

WD repeat units lie at residues 36–74, 247–287, and 292–331; these read KTDD…GKCY, AHKS…KLFQ, and TYST…ALEN. A L/FRRG motif motif is present at residues 288-292; that stretch reads FRRGT. A disordered region spans residues 329-430; sequence LENKHKKKKA…SSQAAKNEPL (102 aa). Residues 366-393 are compositionally biased toward acidic residues; the sequence is TQDDDEFADDGDDSDEAVEGDDNDDESL. Residues 404 to 417 are compositionally biased toward low complexity; sequence SQGSSNSFASFNSG.

The protein belongs to the WD repeat PROPPIN family. Component of the PI(3,5)P2 regulatory complex.

Its subcellular location is the preautophagosomal structure membrane. The protein resides in the vacuole membrane. It is found in the endosome membrane. In terms of biological role, the PI(3,5)P2 regulatory complex regulates both the synthesis and turnover of phosphatidylinositol 3,5-bisphosphate (PtdIns(3,5)P2). Necessary for proper vacuole morphology. Plays an important role in osmotically-induced vacuole fragmentation. Required for cytoplasm to vacuole transport (Cvt) vesicle formation, pexophagy and starvation-induced autophagy. Involved in correct ATG9 trafficking to the pre-autophagosomal structure. Might also be involved in premeiotic DNA replication. In Scheffersomyces stipitis (strain ATCC 58785 / CBS 6054 / NBRC 10063 / NRRL Y-11545) (Yeast), this protein is Autophagy-related protein 18 (ATG18).